The sequence spans 515 residues: 1-pyrroline-5-carboxylate dehydrogenase (515 aa).

Active-site residues include Glu286 and Cys320.

The protein belongs to the aldehyde dehydrogenase family. RocA subfamily.

The enzyme catalyses L-glutamate 5-semialdehyde + NAD(+) + H2O = L-glutamate + NADH + 2 H(+). Its pathway is amino-acid degradation; L-proline degradation into L-glutamate; L-glutamate from L-proline: step 2/2. The protein is 1-pyrroline-5-carboxylate dehydrogenase (rocA) of Bacillus subtilis (strain 168).